The following is a 248-amino-acid chain: Triosephosphate isomerase (248 aa).

9–11 (NWK) contributes to the substrate binding site. The active-site Electrophile is the H94. E166 acts as the Proton acceptor in catalysis. Residues G172, S212, and 233-234 (GG) contribute to the substrate site.

It belongs to the triosephosphate isomerase family. As to quaternary structure, homodimer.

It is found in the cytoplasm. It carries out the reaction D-glyceraldehyde 3-phosphate = dihydroxyacetone phosphate. It functions in the pathway carbohydrate biosynthesis; gluconeogenesis. It participates in carbohydrate degradation; glycolysis; D-glyceraldehyde 3-phosphate from glycerone phosphate: step 1/1. In terms of biological role, involved in the gluconeogenesis. Catalyzes stereospecifically the conversion of dihydroxyacetone phosphate (DHAP) to D-glyceraldehyde-3-phosphate (G3P). The chain is Triosephosphate isomerase from Clostridium botulinum (strain Okra / Type B1).